The primary structure comprises 207 residues: Large ribosomal subunit protein uL4 (207 aa).

The protein belongs to the universal ribosomal protein uL4 family. In terms of assembly, part of the 50S ribosomal subunit.

In terms of biological role, one of the primary rRNA binding proteins, this protein initially binds near the 5'-end of the 23S rRNA. It is important during the early stages of 50S assembly. It makes multiple contacts with different domains of the 23S rRNA in the assembled 50S subunit and ribosome. Its function is as follows. Forms part of the polypeptide exit tunnel. The chain is Large ribosomal subunit protein uL4 from Pelagibacter ubique (strain HTCC1062).